Consider the following 247-residue polypeptide: Cementoblastoma-derived protein 1 (247 aa).

Positions 1-28 (MGTSSTDSQQAGHRRCSTSNTSAENLTC) are enriched in polar residues. Disordered regions lie at residues 1 to 52 (MGTS…AGQP) and 147 to 183 (EENS…EKVK).

Phosphorylated. Post-translationally, N-glycosylated. Expressed by cementoblasts, a subpopulation of periodontal ligament cells and cells located around vessels in periodontium (at protein level).

It is found in the cytoplasm. It localises to the nucleus. Functionally, may play a role in development of the periodontium which surrounds and supports the teeth by promoting the differentiation of multi-potent cells from the periodontal ligament into cementoblasts to form the cementum. Binds hydroxyapatite and may promote the biomineralization of the cementum. Also promotes cell proliferation. This chain is Cementoblastoma-derived protein 1, found in Homo sapiens (Human).